Consider the following 37-residue polypeptide: Large ribosomal subunit protein bL36c (37 aa).

Belongs to the bacterial ribosomal protein bL36 family.

Its subcellular location is the plastid. The protein resides in the chloroplast. This Gnetum parvifolium (Small-leaved jointfir) protein is Large ribosomal subunit protein bL36c.